Here is a 507-residue protein sequence, read N- to C-terminus: MARIANKAAIDAAWKQVSACSEKTLKQLFEEDSNRLSGLVVETAKLRFDFSKNHLDSQKLTAFKKLLEACDFDARRKALFAGEKINITEDRAVEHMAERGQGAPASVARAKEYHARMRTLIEAIDAGAFGEVKHLLHIGIGGSALGPKLLIDALTRESGRYDVAVVSNVDGQALEEVFKKFNPHKTLIAVASKTFTTAETMLNAESAMEWMKKHGVEDPQGRMIALTANPAKASEMGIDDTRILPFAESIGGRYSLWSSIGFPAALALGWEGFQQLLEGGAAMDRHFLEAAPEKNAPILAAFADQYYSAVRGAQTHGIFAYDERLQLLPFYLQQLEMESNGKRVDLDGNLIDHPSAFITWGGVGTDAQHAVFQLLHQGTRLVPIEFIAAIKADDTLNPVHHKTLLTNAFAQGAALMSGRDNKDPARSYPGDRPSTTILMEELRPAQLGALIAFYEHRTFTNGVLLGINSFDQFGVELGKEMAHAIADHPENSDFDPSTKALIAAALK.

Glutamate 338 functions as the Proton donor in the catalytic mechanism. Residues histidine 369 and lysine 479 contribute to the active site.

This sequence belongs to the GPI family.

Its subcellular location is the cytoplasm. The enzyme catalyses alpha-D-glucose 6-phosphate = beta-D-fructose 6-phosphate. The protein operates within carbohydrate biosynthesis; gluconeogenesis. Its pathway is carbohydrate degradation; glycolysis; D-glyceraldehyde 3-phosphate and glycerone phosphate from D-glucose: step 2/4. Functionally, provides a gateway for fructose into the Entner-Doudouroff pathway. Catalyzes the reversible isomerization of glucose-6-phosphate to fructose-6-phosphate. The protein is Glucose-6-phosphate isomerase of Zymomonas mobilis subsp. mobilis (strain ATCC 31821 / ZM4 / CP4).